A 955-amino-acid chain; its full sequence is Probable autotransporter YcgV (955 aa).

The interval 616-659 (ASGTVPEPTPNPEPTPAPAQPPIVNPDPTPEPAPTPKPTTTADA) is disordered. Residues 622–652 (EPTPNPEPTPAPAQPPIVNPDPTPEPAPTPK) show a composition bias toward pro residues. The 269-residue stretch at 687 to 955 (NQSKDGNIWL…QVNGGYRFSF (269 aa)) folds into the Autotransporter domain.

Its function is as follows. Upon overexpression shows increased adherence to polyvinyl chloride (PVC) plates, increased mature biofilm formation. In Escherichia coli (strain K12), this protein is Probable autotransporter YcgV (ycgV).